A 37-amino-acid polypeptide reads, in one-letter code: Large ribosomal subunit protein bL36 (37 aa).

This sequence belongs to the bacterial ribosomal protein bL36 family.

This is Large ribosomal subunit protein bL36 from Parasynechococcus marenigrum (strain WH8102).